Here is a 450-residue protein sequence, read N- to C-terminus: Glucose-6-phosphate isomerase (450 aa).

E291 functions as the Proton donor in the catalytic mechanism. Active-site residues include H312 and K426.

It belongs to the GPI family.

It localises to the cytoplasm. The enzyme catalyses alpha-D-glucose 6-phosphate = beta-D-fructose 6-phosphate. The protein operates within carbohydrate biosynthesis; gluconeogenesis. It participates in carbohydrate degradation; glycolysis; D-glyceraldehyde 3-phosphate and glycerone phosphate from D-glucose: step 2/4. In terms of biological role, catalyzes the reversible isomerization of glucose-6-phosphate to fructose-6-phosphate. The chain is Glucose-6-phosphate isomerase from Clostridium novyi (strain NT).